Here is a 433-residue protein sequence, read N- to C-terminus: Enolase (433 aa).

Q167 provides a ligand contact to (2R)-2-phosphoglycerate. E209 functions as the Proton donor in the catalytic mechanism. Residues D246, E291, and D318 each coordinate Mg(2+). Residues K343, R372, S373, and K394 each contribute to the (2R)-2-phosphoglycerate site. Catalysis depends on K343, which acts as the Proton acceptor.

It belongs to the enolase family. In terms of assembly, component of the RNA degradosome, a multiprotein complex involved in RNA processing and mRNA degradation. Requires Mg(2+) as cofactor.

The protein localises to the cytoplasm. Its subcellular location is the secreted. The protein resides in the cell surface. The enzyme catalyses (2R)-2-phosphoglycerate = phosphoenolpyruvate + H2O. Its pathway is carbohydrate degradation; glycolysis; pyruvate from D-glyceraldehyde 3-phosphate: step 4/5. Its function is as follows. Catalyzes the reversible conversion of 2-phosphoglycerate (2-PG) into phosphoenolpyruvate (PEP). It is essential for the degradation of carbohydrates via glycolysis. The sequence is that of Enolase from Vibrio vulnificus (strain YJ016).